The sequence spans 489 residues: Aklavinone 12-hydroxylase DnrF (489 aa).

FAD-binding positions include 17–18, E37, Q121, and L145; that span reads LG. Catalysis depends on Y224, which acts as the Proton acceptor. Residue D308 coordinates FAD. G317 contributes to the aklavinone binding site. 2 disordered regions span residues 402–428 and 455–489; these read VAAEDDDPEPTEDPRRPSGRPGFRAPH and EGGAWPGRPPAPPRIWASASTSISSAAMSPPPPAN. Residues 468-482 are compositionally biased toward low complexity; sequence RIWASASTSISSAAM.

Belongs to the PheA/TfdB FAD monooxygenase family. Monomer. The cofactor is FAD.

The enzyme catalyses aklavinone + NADPH + O2 + H(+) = epsilon-rhodomycinone + NADP(+) + H2O. Its pathway is antibiotic biosynthesis; daunorubicin biosynthesis. It participates in antibiotic biosynthesis; carminomycin biosynthesis. It functions in the pathway antibiotic biosynthesis; rhodomycin biosynthesis. Its function is as follows. Involved in the biosynthesis of the anthracyclines carminomycin, rhodomycin and daunorubicin (daunomycin) which are aromatic polyketide antibiotics that exhibit high cytotoxicity and are widely applied in the chemotherapy of a variety of cancers. Catalyzes the incorporation of a hydroxyl group at position C-11 of aklavinone, resulting in epsilon-rhodomycinone. It cannot accept substrates glycosylated at position C-7. It can also hydroxylate 11-deoxycarminomycinone and can use both NAD or NADP. In Streptomyces peucetius, this protein is Aklavinone 12-hydroxylase DnrF (dnrF).